The primary structure comprises 588 residues: Adenine deaminase (588 aa).

This sequence belongs to the metallo-dependent hydrolases superfamily. Adenine deaminase family. Homodimer. Requires Mn(2+) as cofactor.

The enzyme catalyses adenine + H2O + H(+) = hypoxanthine + NH4(+). This is Adenine deaminase from Escherichia coli O139:H28 (strain E24377A / ETEC).